We begin with the raw amino-acid sequence, 109 residues long: Large ribosomal subunit protein uL22 (109 aa).

The protein belongs to the universal ribosomal protein uL22 family. Part of the 50S ribosomal subunit.

Functionally, this protein binds specifically to 23S rRNA; its binding is stimulated by other ribosomal proteins, e.g. L4, L17, and L20. It is important during the early stages of 50S assembly. It makes multiple contacts with different domains of the 23S rRNA in the assembled 50S subunit and ribosome. In terms of biological role, the globular domain of the protein is located near the polypeptide exit tunnel on the outside of the subunit, while an extended beta-hairpin is found that lines the wall of the exit tunnel in the center of the 70S ribosome. In Blochmanniella pennsylvanica (strain BPEN), this protein is Large ribosomal subunit protein uL22.